The sequence spans 166 residues: Large ribosomal subunit protein uL10 (166 aa).

This sequence belongs to the universal ribosomal protein uL10 family. In terms of assembly, part of the ribosomal stalk of the 50S ribosomal subunit. The N-terminus interacts with L11 and the large rRNA to form the base of the stalk. The C-terminus forms an elongated spine to which L12 dimers bind in a sequential fashion forming a multimeric L10(L12)X complex.

Forms part of the ribosomal stalk, playing a central role in the interaction of the ribosome with GTP-bound translation factors. The sequence is that of Large ribosomal subunit protein uL10 from Shewanella woodyi (strain ATCC 51908 / MS32).